The chain runs to 586 residues: MGQDKKNLTAAAAAAYVDDSTTWESFGLDARLLQAIDQLGFENPTLIQSSAIPLAIEEKRDIIAKASTGSGKTAAYSIPIIQNLLQDESTEREIKSIILVPTRELSNQVSQFLEKLLIFCNSKIRLINISSNLSDQVINSLLINKPEIIVSTPAKLIQILEKNVNSNLINLSTVKNLTIDEVDLVLSYGYLEDLQKLESYLPIKKNLQTFLMSATINDDLNDIKSKFCSRPAILKLNDEDSNQNNLVQYYAKTTEFDKFLLTYVIFKLNLIKGKTLVFVNNIDRGYRLKLFLEQFGVRCCILNSELPINSRLNIVEQYNKNVYNLLIATDETNDFTIQEDEKDEGEEIEENKNEENDGKTSKNTKKPNQKKDKEYGVSRGVDFRNVACVLNFDLPTSSKSYIHRVGRTARAGKSGMALSFVLPLNEFGKHKTASLSTAKKDEKVLRRIVRQQSNNGFEIKPYQFDMKQVEGFRYRAEDAFRAVTQSAVREARIKELKNELVNSDKLKRFFEENPQDLASLRHDKELHPTRVQTHLKRVPEYLLPESARADHKKIGFVPFHKNKVHKNRKRKPSGRKPDPLKSFRPK.

The Q motif motif lies at 21-49; the sequence is TTWESFGLDARLLQAIDQLGFENPTLIQS. The region spanning 53–234 is the Helicase ATP-binding domain; it reads PLAIEEKRDI…SKFCSRPAIL (182 aa). 66–73 contacts ATP; sequence ASTGSGKT. A DEAD box motif is present at residues 180–183; the sequence is DEVD. Residues 245–467 enclose the Helicase C-terminal domain; sequence NLVQYYAKTT…EIKPYQFDMK (223 aa). Positions 339 to 349 are enriched in acidic residues; the sequence is EDEKDEGEEIE. 2 disordered regions span residues 339–375 and 560–586; these read EDEKDEGEEIEENKNEENDGKTSKNTKKPNQKKDKEY and HKNKVHKNRKRKPSGRKPDPLKSFRPK. A compositionally biased stretch (basic and acidic residues) spans 350–360; sequence ENKNEENDGKT. Basic residues predominate over residues 560-574; the sequence is HKNKVHKNRKRKPSG. Positions 575-586 are enriched in basic and acidic residues; it reads RKPDPLKSFRPK.

It belongs to the DEAD box helicase family. DDX56/DBP9 subfamily.

The protein localises to the nucleus. Its subcellular location is the nucleolus. The catalysed reaction is ATP + H2O = ADP + phosphate + H(+). In terms of biological role, ATP-binding RNA helicase involved in the biogenesis of 60S ribosomal subunits and is required for the normal formation of 25S and 5.8S rRNAs. The sequence is that of ATP-dependent RNA helicase DBP9 (DBP9) from Debaryomyces hansenii (strain ATCC 36239 / CBS 767 / BCRC 21394 / JCM 1990 / NBRC 0083 / IGC 2968) (Yeast).